A 122-amino-acid chain; its full sequence is Large ribosomal subunit protein uL14 (122 aa).

Belongs to the universal ribosomal protein uL14 family. In terms of assembly, part of the 50S ribosomal subunit. Forms a cluster with proteins L3 and L19. In the 70S ribosome, L14 and L19 interact and together make contacts with the 16S rRNA in bridges B5 and B8.

Binds to 23S rRNA. Forms part of two intersubunit bridges in the 70S ribosome. In Endomicrobium trichonymphae, this protein is Large ribosomal subunit protein uL14.